The sequence spans 129 residues: Small ribosomal subunit protein uS11 (129 aa).

It belongs to the universal ribosomal protein uS11 family. In terms of assembly, part of the 30S ribosomal subunit. Interacts with proteins S7 and S18. Binds to IF-3.

Located on the platform of the 30S subunit, it bridges several disparate RNA helices of the 16S rRNA. Forms part of the Shine-Dalgarno cleft in the 70S ribosome. The chain is Small ribosomal subunit protein uS11 from Psychromonas ingrahamii (strain DSM 17664 / CCUG 51855 / 37).